A 423-amino-acid polypeptide reads, in one-letter code: COP9 signalosome complex subunit 3 (423 aa).

Ala2 carries the post-translational modification N-acetylalanine. Residues 197-365 form the PCI domain; the sequence is NFERALYFYE…GMVSFHDNPE (169 aa). The disordered stretch occupies residues 402-423; it reads QFVQKSMGSQEDDSGNKPSSYS. Ser407, Ser410, and Ser423 each carry phosphoserine.

This sequence belongs to the CSN3 family. In terms of assembly, component of the CSN complex, composed of COPS1/GPS1, COPS2, COPS3, COPS4, COPS5, COPS6, COPS7 (COPS7A or COPS7B), COPS8 and COPS9. In the complex, it probably interacts directly with COPS1, COPS4, COPS8 and COPS9. Interacts with CK2 and PKD. Interacts with the translation initiation factor EIF3S6 and IKBKG. Interacts with ERCC6. As to expression, widely expressed.

The protein localises to the cytoplasm. The protein resides in the nucleus. Component of the COP9 signalosome complex (CSN), a complex involved in various cellular and developmental processes. The CSN complex is an essential regulator of the ubiquitin (Ubl) conjugation pathway by mediating the deneddylation of the cullin subunits of SCF-type E3 ligase complexes, leading to decrease the Ubl ligase activity of SCF-type complexes such as SCF, CSA or DDB2. The complex is also involved in phosphorylation of p53/TP53, c-jun/JUN, IkappaBalpha/NFKBIA, ITPK1 and IRF8/ICSBP, possibly via its association with CK2 and PKD kinases. CSN-dependent phosphorylation of TP53 and JUN promotes and protects degradation by the Ubl system, respectively. Essential to maintain the survival of epiblast cells and thus the development of the postimplantation embryo. This is COP9 signalosome complex subunit 3 (Cops3) from Mus musculus (Mouse).